The chain runs to 174 residues: Crossover junction endodeoxyribonuclease RuvC (174 aa).

Residues Asp8, Glu67, and Asp139 contribute to the active site. Mg(2+) contacts are provided by Asp8, Glu67, and Asp139.

It belongs to the RuvC family. As to quaternary structure, homodimer which binds Holliday junction (HJ) DNA. The HJ becomes 2-fold symmetrical on binding to RuvC with unstacked arms; it has a different conformation from HJ DNA in complex with RuvA. In the full resolvosome a probable DNA-RuvA(4)-RuvB(12)-RuvC(2) complex forms which resolves the HJ. Requires Mg(2+) as cofactor.

The protein resides in the cytoplasm. It carries out the reaction Endonucleolytic cleavage at a junction such as a reciprocal single-stranded crossover between two homologous DNA duplexes (Holliday junction).. Its function is as follows. The RuvA-RuvB-RuvC complex processes Holliday junction (HJ) DNA during genetic recombination and DNA repair. Endonuclease that resolves HJ intermediates. Cleaves cruciform DNA by making single-stranded nicks across the HJ at symmetrical positions within the homologous arms, yielding a 5'-phosphate and a 3'-hydroxyl group; requires a central core of homology in the junction. The consensus cleavage sequence is 5'-(A/T)TT(C/G)-3'. Cleavage occurs on the 3'-side of the TT dinucleotide at the point of strand exchange. HJ branch migration catalyzed by RuvA-RuvB allows RuvC to scan DNA until it finds its consensus sequence, where it cleaves and resolves the cruciform DNA. In Pseudomonas entomophila (strain L48), this protein is Crossover junction endodeoxyribonuclease RuvC.